Reading from the N-terminus, the 416-residue chain is Mitochondrial inner membrane i-AAA protease complex subunit MGR1 (416 aa).

The interval 1 to 28 is disordered; the sequence is MAVFTPPSGNSNSTDHTHTQDDHDKDDN. Residues 1–56 are Mitochondrial intermembrane-facing; the sequence is MAVFTPPSGNSNSTDHTHTQDDHDKDDNDIKKFYIRPSLGLKLWGPLVPAPDNLPG. Basic and acidic residues predominate over residues 15–28; that stretch reads DHTHTQDDHDKDDN. The chain crosses the membrane as a helical span at residues 57–73; it reads LYTLITIQSAVGFFALW. Over 74 to 151 the chain is Mitochondrial matrix; that stretch reads RLRRLYKLPP…RQSRFVSVRK (78 aa). A helical membrane pass occupies residues 152 to 169; sequence LLWGLFGSLLLSQSLLEL. Topologically, residues 170–416 are mitochondrial intermembrane; the sequence is TRLNFLKYDP…PKALTNEKTH (247 aa). Over residues 390-400 the composition is skewed to polar residues; sequence SHTKTPTSTDQ. Residues 390–416 form a disordered region; that stretch reads SHTKTPTSTDQPLPGPTPKALTNEKTH.

The protein belongs to the MGR1 family. As to quaternary structure, component of the mitochondrial inner membrane i-AAA protease complex composed of at least MRG1 and YME1. Interacts directly with YME1.

The protein resides in the mitochondrion inner membrane. Functionally, component of the mitochondrial inner membrane i-AAA protease complex required for mitochondrial inner membrane protein turnover. Required for growth of cells lacking the mitochondrial genome. The sequence is that of Mitochondrial inner membrane i-AAA protease complex subunit MGR1 (MGR1) from Saccharomyces cerevisiae (strain YJM789) (Baker's yeast).